The chain runs to 353 residues: UDP-N-acetylglucosamine--N-acetylmuramyl-(pentapeptide) pyrophosphoryl-undecaprenol N-acetylglucosamine transferase (353 aa).

UDP-N-acetyl-alpha-D-glucosamine is bound by residues 10 to 12 (TGG), asparagine 124, serine 183, and glutamine 283.

Belongs to the glycosyltransferase 28 family. MurG subfamily.

The protein localises to the cell inner membrane. It carries out the reaction di-trans,octa-cis-undecaprenyl diphospho-N-acetyl-alpha-D-muramoyl-L-alanyl-D-glutamyl-meso-2,6-diaminopimeloyl-D-alanyl-D-alanine + UDP-N-acetyl-alpha-D-glucosamine = di-trans,octa-cis-undecaprenyl diphospho-[N-acetyl-alpha-D-glucosaminyl-(1-&gt;4)]-N-acetyl-alpha-D-muramoyl-L-alanyl-D-glutamyl-meso-2,6-diaminopimeloyl-D-alanyl-D-alanine + UDP + H(+). It participates in cell wall biogenesis; peptidoglycan biosynthesis. Cell wall formation. Catalyzes the transfer of a GlcNAc subunit on undecaprenyl-pyrophosphoryl-MurNAc-pentapeptide (lipid intermediate I) to form undecaprenyl-pyrophosphoryl-MurNAc-(pentapeptide)GlcNAc (lipid intermediate II). This chain is UDP-N-acetylglucosamine--N-acetylmuramyl-(pentapeptide) pyrophosphoryl-undecaprenol N-acetylglucosamine transferase, found in Helicobacter pylori (strain J99 / ATCC 700824) (Campylobacter pylori J99).